A 459-amino-acid polypeptide reads, in one-letter code: Ribulose bisphosphate carboxylase large chain (459 aa).

At Lys4 the chain carries N6,N6,N6-trimethyllysine. Residues Asn113 and Thr163 each contribute to the substrate site. Catalysis depends on Lys165, which acts as the Proton acceptor. Lys167 contacts substrate. The Mg(2+) site is built by Lys191, Asp193, and Glu194. At Lys191 the chain carries N6-carboxylysine. The active-site Proton acceptor is His284. The substrate site is built by Arg285, His317, and Ser369.

It belongs to the RuBisCO large chain family. Type I subfamily. As to quaternary structure, heterohexadecamer of 8 large chains and 8 small chains; disulfide-linked. The disulfide link is formed within the large subunit homodimers. Mg(2+) is required as a cofactor. The disulfide bond which can form in the large chain dimeric partners within the hexadecamer appears to be associated with oxidative stress and protein turnover.

Its subcellular location is the plastid. The protein localises to the chloroplast. The enzyme catalyses 2 (2R)-3-phosphoglycerate + 2 H(+) = D-ribulose 1,5-bisphosphate + CO2 + H2O. It catalyses the reaction D-ribulose 1,5-bisphosphate + O2 = 2-phosphoglycolate + (2R)-3-phosphoglycerate + 2 H(+). RuBisCO catalyzes two reactions: the carboxylation of D-ribulose 1,5-bisphosphate, the primary event in carbon dioxide fixation, as well as the oxidative fragmentation of the pentose substrate in the photorespiration process. Both reactions occur simultaneously and in competition at the same active site. The sequence is that of Ribulose bisphosphate carboxylase large chain from Morus alba (White mulberry).